The chain runs to 485 residues: Inosine-5'-monophosphate dehydrogenase (485 aa).

CBS domains follow at residues 97-154 (IIRD…VSDV) and 155-211 (MVRD…PDAS). Residues Asp-246 and 295–297 (GIG) contribute to the NAD(+) site. Residues Gly-297 and Gly-299 each coordinate K(+). Ser-300 contacts IMP. A K(+)-binding site is contributed by Cys-302. Cys-302 acts as the Thioimidate intermediate in catalysis. IMP-binding positions include 335–337 (DGG), 358–359 (GS), and 382–386 (YRGMG). Catalysis depends on Arg-398, which acts as the Proton acceptor. An IMP-binding site is contributed by Glu-409. Residues Glu-463, Ser-464, and His-465 each coordinate K(+).

This sequence belongs to the IMPDH/GMPR family. As to quaternary structure, homotetramer. K(+) serves as cofactor.

The enzyme catalyses IMP + NAD(+) + H2O = XMP + NADH + H(+). Its pathway is purine metabolism; XMP biosynthesis via de novo pathway; XMP from IMP: step 1/1. With respect to regulation, mycophenolic acid (MPA) is a non-competitive inhibitor that prevents formation of the closed enzyme conformation by binding to the same site as the amobile flap. In contrast, mizoribine monophosphate (MZP) is a competitive inhibitor that induces the closed conformation. MPA is a potent inhibitor of mammalian IMPDHs but a poor inhibitor of the bacterial enzymes. MZP is a more potent inhibitor of bacterial IMPDH. Its function is as follows. Catalyzes the conversion of inosine 5'-phosphate (IMP) to xanthosine 5'-phosphate (XMP), the first committed and rate-limiting step in the de novo synthesis of guanine nucleotides, and therefore plays an important role in the regulation of cell growth. This is Inosine-5'-monophosphate dehydrogenase from Thermoplasma acidophilum (strain ATCC 25905 / DSM 1728 / JCM 9062 / NBRC 15155 / AMRC-C165).